The following is a 490-amino-acid chain: Acetyl-coenzyme A carboxylase carboxyl transferase subunit beta, chloroplastic (490 aa).

Residues leucine 228–asparagine 490 enclose the CoA carboxyltransferase N-terminal domain. Zn(2+) contacts are provided by cysteine 232, cysteine 235, cysteine 251, and cysteine 254. The C4-type zinc-finger motif lies at cysteine 232 to cysteine 254.

It belongs to the AccD/PCCB family. In terms of assembly, acetyl-CoA carboxylase is a heterohexamer composed of biotin carboxyl carrier protein, biotin carboxylase and 2 subunits each of ACCase subunit alpha and ACCase plastid-coded subunit beta (accD). Zn(2+) serves as cofactor.

It localises to the plastid. The protein localises to the chloroplast stroma. The catalysed reaction is N(6)-carboxybiotinyl-L-lysyl-[protein] + acetyl-CoA = N(6)-biotinyl-L-lysyl-[protein] + malonyl-CoA. The protein operates within lipid metabolism; malonyl-CoA biosynthesis; malonyl-CoA from acetyl-CoA: step 1/1. Functionally, component of the acetyl coenzyme A carboxylase (ACC) complex. Biotin carboxylase (BC) catalyzes the carboxylation of biotin on its carrier protein (BCCP) and then the CO(2) group is transferred by the transcarboxylase to acetyl-CoA to form malonyl-CoA. In Eucalyptus globulus subsp. globulus (Tasmanian blue gum), this protein is Acetyl-coenzyme A carboxylase carboxyl transferase subunit beta, chloroplastic.